Consider the following 95-residue polypeptide: MSVDISTVKRVAHLARIAVNDDDAERMTGELNAILGFVEQLNEVNVDGIEPMTSVTPMDMRMRQDKVTDGGIAAAVVANAPVTEDNFFVVPKVVE.

The protein belongs to the GatC family. Heterotrimer of A, B and C subunits.

It carries out the reaction L-glutamyl-tRNA(Gln) + L-glutamine + ATP + H2O = L-glutaminyl-tRNA(Gln) + L-glutamate + ADP + phosphate + H(+). The catalysed reaction is L-aspartyl-tRNA(Asn) + L-glutamine + ATP + H2O = L-asparaginyl-tRNA(Asn) + L-glutamate + ADP + phosphate + 2 H(+). Allows the formation of correctly charged Asn-tRNA(Asn) or Gln-tRNA(Gln) through the transamidation of misacylated Asp-tRNA(Asn) or Glu-tRNA(Gln) in organisms which lack either or both of asparaginyl-tRNA or glutaminyl-tRNA synthetases. The reaction takes place in the presence of glutamine and ATP through an activated phospho-Asp-tRNA(Asn) or phospho-Glu-tRNA(Gln). This is Aspartyl/glutamyl-tRNA(Asn/Gln) amidotransferase subunit C from Brucella anthropi (strain ATCC 49188 / DSM 6882 / CCUG 24695 / JCM 21032 / LMG 3331 / NBRC 15819 / NCTC 12168 / Alc 37) (Ochrobactrum anthropi).